Here is a 178-residue protein sequence, read N- to C-terminus: Large ribosomal subunit protein uL6 (178 aa).

This sequence belongs to the universal ribosomal protein uL6 family. Part of the 50S ribosomal subunit.

Its function is as follows. This protein binds to the 23S rRNA, and is important in its secondary structure. It is located near the subunit interface in the base of the L7/L12 stalk, and near the tRNA binding site of the peptidyltransferase center. The protein is Large ribosomal subunit protein uL6 of Nitrosococcus oceani (strain ATCC 19707 / BCRC 17464 / JCM 30415 / NCIMB 11848 / C-107).